A 778-amino-acid chain; its full sequence is Arf-GAP with coiled-coil, ANK repeat and PH domain-containing protein 2 (778 aa).

The 226-residue stretch at 1-226 (MKMTVDFEEC…MKDLGAQLDR (226 aa)) folds into the BAR domain. In terms of domain architecture, PH spans 266–361 (GIVMEGYLFK…WIKAVQTSIA (96 aa)). Residues 371–391 (SEKLDKKSSPSTGSLDSGNES) are disordered. The segment covering 379 to 388 (SPSTGSLDSG) has biased composition (polar residues). A phosphoserine mark is found at Ser-384 and Ser-387. One can recognise an Arf-GAP domain in the interval 399-520 (ESALQRVQCV…KFVDKYSVSS (122 aa)). The segment at 414–437 (CCDCGLADPRWASINLGITLCIEC) adopts a C4-type zinc-finger fold. A disordered region spans residues 518–596 (VSSSPPEQEK…EPEGERQDSS (79 aa)). At Ser-521 the chain carries Phosphoserine. A compositionally biased stretch (basic and acidic residues) spans 524–539 (EQEKKVVSKDSEEKRL). The segment covering 550–569 (VRTSIQSSVKSNDSGIQQSS) has biased composition (polar residues). 2 positions are modified to phosphoserine: Ser-581 and Ser-584. ANK repeat units lie at residues 640–669 (NKATPLIQAVLGGSLVTCEFLLQNGANVNQ), 673–702 (QGRGPLHHATVLGHTGQVCLFLKRGANQHA), and 706–735 (EGKDPLSIAVEAANADIVTLLRLARMNEEM). Tyr-742 bears the Phosphotyrosine mark. Ser-775 bears the Phosphoserine mark.

As to quaternary structure, interacts with RAB35 (GTP-bound form); the interaction is direct and probably recruits ACAP2 to membranes. Interacts with MICALL1; the interaction is indirect through RAB35.

Its subcellular location is the endosome membrane. The protein localises to the cell membrane. Its activity is regulated as follows. GAP activity stimulated by phosphatidylinositol 4,5-bisphosphate (PIP2) and phosphatidic acid. In terms of biological role, GTPase-activating protein (GAP) for ADP ribosylation factor 6 (ARF6). Doesn't show GAP activity for RAB35. The protein is Arf-GAP with coiled-coil, ANK repeat and PH domain-containing protein 2 (ACAP2) of Oryctolagus cuniculus (Rabbit).